We begin with the raw amino-acid sequence, 87 residues long: U3-theraphotoxin-Hhn1e (87 aa).

An N-terminal signal peptide occupies residues 1–24 (MVNMKASMFLTFAGLVLLFVVCYA). Residues 25-52 (SESEEKEFPKGMLSSIFAVDNDFKQEER) constitute a propeptide that is removed on maturation. Cystine bridges form between cysteine 54/cysteine 67, cysteine 61/cysteine 72, and cysteine 66/cysteine 79.

This sequence belongs to the neurotoxin 10 (Hwtx-1) family. 51 (Hntx-8) subfamily. Hntx-8 sub-subfamily. In terms of tissue distribution, expressed by the venom gland.

It is found in the secreted. In terms of biological role, ion channel inhibitor. This Cyriopagopus hainanus (Chinese bird spider) protein is U3-theraphotoxin-Hhn1e.